The primary structure comprises 378 residues: S-(hydroxymethyl)glutathione dehydrogenase (378 aa).

7 residues coordinate Zn(2+): cysteine 49, histidine 71, cysteine 101, cysteine 104, cysteine 107, cysteine 115, and cysteine 178.

It belongs to the zinc-containing alcohol dehydrogenase family. Class-III subfamily. As to quaternary structure, homodimer. It depends on Zn(2+) as a cofactor.

It localises to the cytoplasm. The catalysed reaction is S-(hydroxymethyl)glutathione + NADP(+) = S-formylglutathione + NADPH + H(+). It catalyses the reaction S-(hydroxymethyl)glutathione + NAD(+) = S-formylglutathione + NADH + H(+). It carries out the reaction a primary alcohol + NAD(+) = an aldehyde + NADH + H(+). The enzyme catalyses a secondary alcohol + NAD(+) = a ketone + NADH + H(+). The catalysed reaction is S-nitrosoglutathione + NADH + H(+) = S-(hydroxysulfenamide)glutathione + NAD(+). Has high formaldehyde dehydrogenase activity in the presence of glutathione and catalyzes the oxidation of normal alcohols in a reaction that is not GSH-dependent. In addition, hemithiolacetals other than those formed from GSH, including omega-thiol fatty acids, also are substrates. Also acts as a S-nitroso-glutathione reductase by catalyzing the NADH-dependent reduction of S-nitrosoglutathione. The polypeptide is S-(hydroxymethyl)glutathione dehydrogenase (frmA) (Haemophilus influenzae (strain ATCC 51907 / DSM 11121 / KW20 / Rd)).